We begin with the raw amino-acid sequence, 207 residues long: Negative modulator of initiation of replication (207 aa).

Positions 43–54 (ATPITSSVTPSA) are enriched in polar residues. The segment at 43–63 (ATPITSSVTPSAPRQEAVNDE) is disordered.

The protein belongs to the SeqA family. As to quaternary structure, homodimer. Polymerizes to form helical filaments.

It is found in the cytoplasm. Functionally, negative regulator of replication initiation, which contributes to regulation of DNA replication and ensures that replication initiation occurs exactly once per chromosome per cell cycle. Binds to pairs of hemimethylated GATC sequences in the oriC region, thus preventing assembly of replication proteins and re-initiation at newly replicated origins. Repression is relieved when the region becomes fully methylated. This is Negative modulator of initiation of replication from Psychromonas ingrahamii (strain DSM 17664 / CCUG 51855 / 37).